The chain runs to 316 residues: Probable porphobilinogen deaminase (316 aa).

An S-(dipyrrolylmethanemethyl)cysteine modification is found at Cys234.

This sequence belongs to the HMBS family. Requires dipyrromethane as cofactor.

The catalysed reaction is 4 porphobilinogen + H2O = hydroxymethylbilane + 4 NH4(+). It functions in the pathway porphyrin-containing compound metabolism; protoporphyrin-IX biosynthesis; coproporphyrinogen-III from 5-aminolevulinate: step 2/4. Functionally, tetrapolymerization of the monopyrrole PBG into the hydroxymethylbilane pre-uroporphyrinogen in several discrete steps. The protein is Probable porphobilinogen deaminase of Methanosarcina mazei (strain ATCC BAA-159 / DSM 3647 / Goe1 / Go1 / JCM 11833 / OCM 88) (Methanosarcina frisia).